A 92-amino-acid chain; its full sequence is Small ribosomal subunit protein uS19 (92 aa).

This sequence belongs to the universal ribosomal protein uS19 family.

Functionally, protein S19 forms a complex with S13 that binds strongly to the 16S ribosomal RNA. The chain is Small ribosomal subunit protein uS19 from Anoxybacillus flavithermus (strain DSM 21510 / WK1).